Reading from the N-terminus, the 480-residue chain is Gasdermin-C3 (480 aa).

The segment at 1 to 226 (MGYSFDRASK…TCVILPSATK (226 aa)) is triggers pyroptosis.

This sequence belongs to the gasdermin family. Homooligomer; homooligomeric ring-shaped pore complex containing 27-28 subunits when inserted in the membrane. In terms of processing, cleavage by CASP8 relieves autoinhibition by releasing the N-terminal moiety (Gasdermin-C3, N-terminal) that initiates pyroptosis. Post-translationally, palmitoylated.

The protein localises to the cytoplasm. It localises to the cytosol. The protein resides in the cell membrane. Its activity is regulated as follows. The full-length protein before cleavage is inactive: intramolecular interactions between N- and C-terminal domains mediate autoinhibition in the absence of activation signal. The intrinsic pyroptosis-inducing activity is carried by the released N-terminal moiety (Gasdermin-C3, N-terminal) following cleavage by caspase CASP8. Functionally, this form constitutes the precursor of the pore-forming protein: upon cleavage, the released N-terminal moiety (Gasdermin-C3, N-terminal) binds to membranes and forms pores, triggering pyroptosis. Pore-forming protein that causes membrane permeabilization and pyroptosis. Produced by the cleavage of gasdermin-C3 by caspase CASP8 in response to death signals. After cleavage, moves to the plasma membrane where it strongly binds to membrane inner leaflet lipids. Homooligomerizes within the membrane and forms pores of 10-15 nanometers (nm) of inner diameter, triggering pyroptosis. This is Gasdermin-C3 from Mus musculus (Mouse).